The chain runs to 706 residues: Phosphatase and actin regulator 4 (706 aa).

One copy of the RPEL 1 repeat lies at 42 to 67 (EVLERKISMRKPREELVKRGLLVEVP). 4 disordered regions span residues 65-123 (EVPE…QPCA), 196-380 (VHPR…HIPV), 385-404 (VPML…QSAS), and 459-579 (LKVP…REEW). Polar residues predominate over residues 106-121 (DSTGSRPKSGETTVQP). Residues 200 to 211 (HLSEKNSEKYRP) are compositionally biased toward basic and acidic residues. Positions 266–276 (DPSTRQQSSVP) are enriched in polar residues. The span at 290–299 (KQPPVPPPKP) shows a compositional bias: pro residues. 3 stretches are compositionally biased toward acidic residues: residues 463-476 (DDDD…DESL), 508-523 (QEEE…DTDS), and 531-541 (EDDEEEEEEET). The segment covering 563–579 (GPHDSNPEFPQRSREEW) has biased composition (basic and acidic residues). RPEL repeat units follow at residues 588-613 (SQLN…QKNE) and 625-650 (RRLT…RFNE).

It belongs to the phosphatase and actin regulator family. Binds ppp1ca and actin.

The protein localises to the cytoplasm. It localises to the cell projection. The protein resides in the lamellipodium. Functionally, regulator of protein phosphatase 1 (PP1) required for neural tube and optic fissure closure, and enteric neural crest cell (ENCCs) migration during development. Acts as an activator of PP1. During neural tube closure, localizes to the ventral neural tube and activates PP1, leading to down-regulate cell proliferation within cranial neural tissue and the neural retina. Also acts as a regulator of migration of enteric neural crest cells (ENCCs) by activating PP1, leading to repression of the integrin signaling through the rho/rock pathway. This Xenopus tropicalis (Western clawed frog) protein is Phosphatase and actin regulator 4 (phactr4).